The primary structure comprises 214 residues: Redox-sensing transcriptional repressor Rex (214 aa).

Positions Leu-18–Phe-57 form a DNA-binding region, H-T-H motif. Gly-92–Gly-97 contacts NAD(+).

Belongs to the transcriptional regulatory Rex family. In terms of assembly, homodimer.

The protein localises to the cytoplasm. Modulates transcription in response to changes in cellular NADH/NAD(+) redox state. The protein is Redox-sensing transcriptional repressor Rex of Staphylococcus carnosus (strain TM300).